The following is a 400-amino-acid chain: Spaetzle-processing enzyme (400 aa).

Positions 1–27 (MASTERNFLLLSLVVSALSGLVHRSDA) are cleaved as a signal peptide. One can recognise a Clip domain in the interval 34–94 (SCTPQQSDER…GLVNRILVCC (61 aa)). Disulfide bonds link Cys-35-Cys-93, Cys-46-Cys-77, Cys-52-Cys-94, Cys-127-Cys-269, Cys-166-Cys-182, and Cys-211-Cys-221. Residues 135-399 (IFGGTNTTLW…FIDWIKQKLE (265 aa)) form the Peptidase S1 domain. Asn-140 carries N-linked (GlcNAc...) asparagine glycosylation. His-181 functions as the Charge relay system in the catalytic mechanism. Ca(2+)-binding residues include Glu-202, Asp-204, Thr-207, and Asp-210. The active-site Charge relay system is Asp-249. N-linked (GlcNAc...) asparagine glycosylation is present at Asn-311. 2 disulfides stabilise this stretch: Cys-315–Cys-332 and Cys-342–Cys-375. The active-site Charge relay system is Ser-346.

Belongs to the peptidase S1 family. CLIP subfamily. In the active form, heterodimer of a light chain and a heavy chain; disulfide-linked. Proteolytically cleaved in response to Gram-negative bacterial or fungal infection; processing is likely to result in its activation. Cleavage produces a light chain containing the CLIP domain and a catalytic heavy chain which remain covalently associated through an interchain disulfide bond.

It is found in the secreted. Its function is as follows. Endopeptidase which plays a key role in innate immunity by cleaving Tl ligand spz and thereby activating the Toll pathway in response to fungal and Gram-positive bacterial infections. Acts downstream of pathogen recognition receptors PGRP-SA and GNBP1 and protease grass in response to Gram-positive bacterial infection. Acts downstream of protease psh in response to fungal infection. The protein is Spaetzle-processing enzyme of Drosophila melanogaster (Fruit fly).